A 415-amino-acid chain; its full sequence is Histidine--tRNA ligase (415 aa).

This sequence belongs to the class-II aminoacyl-tRNA synthetase family. Homodimer.

Its subcellular location is the cytoplasm. It carries out the reaction tRNA(His) + L-histidine + ATP = L-histidyl-tRNA(His) + AMP + diphosphate + H(+). This chain is Histidine--tRNA ligase, found in Gluconacetobacter diazotrophicus (strain ATCC 49037 / DSM 5601 / CCUG 37298 / CIP 103539 / LMG 7603 / PAl5).